A 443-amino-acid chain; its full sequence is Threonine/serine transporter TdcC (443 aa).

A run of 11 helical transmembrane segments spans residues 22–42 (TTWT…FFPI), 44–64 (AGFG…PIAF), 97–117 (GVVI…IYGV), 140–160 (FVAL…KDLM), 163–183 (VMSY…LSLI), 207–227 (ILIT…FSPI), 261–281 (MLMV…LSPA), 311–331 (FAIT…FKSF), 366–386 (LSMI…PNIL), 389–409 (IEAM…MYAI), and 423–443 (DNVF…YKLF).

It belongs to the amino acid/polyamine transporter 2 family. SdaC/TdcC subfamily.

It localises to the cell inner membrane. The enzyme catalyses L-threonine(in) + H(+)(in) = L-threonine(out) + H(+)(out). The catalysed reaction is L-serine(in) + H(+)(in) = L-serine(out) + H(+)(out). Functionally, involved in the import of threonine and serine into the cell, with the concomitant import of a proton (symport system). This chain is Threonine/serine transporter TdcC, found in Shigella flexneri serotype 5b (strain 8401).